A 686-amino-acid chain; its full sequence is Pentatricopeptide repeat-containing protein At4g08210 (686 aa).

18 PPR repeats span residues 4–38 (DLKL…GISQ), 39–69 (NVFI…MSER), 70–104 (NIVT…EEEA), 106–140 (NEFM…NLRG), 141–171 (DVVL…ILRP), 172–206 (SSTS…NVVS), 207–236 (WNCL…GLVL), 237–271 (DGFA…GLES), 272–302 (SPFA…EKLA), 306–340 (SVAV…DLCF), 341–375 (DSYT…GYEL), 376–406 (DYIV…LPNK), 407–441 (DIIA…GLDA), 442–476 (DQFI…GYES), 477–507 (EPVT…MLER), 508–542 (DVVS…GIEP), 543–573 (NKVT…MKSE), and 579–609 (YLEH…MPLE). Residues 614 to 686 (IWTSLLTACG…AKESGMSWII (73 aa)) form a type E motif; degenerate region.

This sequence belongs to the PPR family. PCMP-E subfamily.

The protein is Pentatricopeptide repeat-containing protein At4g08210 (PCMP-E100) of Arabidopsis thaliana (Mouse-ear cress).